We begin with the raw amino-acid sequence, 491 residues long: MDSISTAILLLILALICLLLTTSSKGKGRLPPGPRALPFLGNLLQLRSQDMLTSLTKLSKEFGAVYTVYLGPRRVVVLSGYQAVKEALVDQAEEFSGRGDYPAFFNFTKGNGIAFSNGDRWKALRKYSLQILRNFGMGKRTIEERILEEGHFLLEELRKTQGKPFDPTFVVSRSVSNIICSVIFGSRFDYDDDRLLTIIHLINENFQIMSSPWGEMYNIFPNLLDWVPGPHRRLFKNYGRMKNLIARSVREHQASLDPNSPRDFIDCFLTKMAQEKQDPLSHFFMDTLLMTTHNLLFGGTETVGTTLRHAFRLLMKYPEVQVRVQEEIDRVVGRERLPTVEDRAEMPYTDAVIHEVQRFADIIPMSLPHRVTRDTNFRGFTIPRGTDVITLLNTVHYDPSQFLKPKEFNPEHFLDANMSFKKSPAFMPFSAGRRLCLGEALARMELFLYLTAILQSFSLQPLGAPEDIDLTPLSSGLGNVPRPYQLCVRAR.

Cys436 lines the heme pocket.

The protein belongs to the cytochrome P450 family. Requires heme as cofactor. Lung specific.

It localises to the endoplasmic reticulum membrane. The protein resides in the microsome membrane. It catalyses the reaction an organic molecule + reduced [NADPH--hemoprotein reductase] + O2 = an alcohol + oxidized [NADPH--hemoprotein reductase] + H2O + H(+). In terms of biological role, bioactivates 3-methylindole (3MI) by dehydrogenation to the putative electrophile 3-methylene-indolenine. Stereoselectively catalyzes the formation of the 1R,2S-oxide from naphthalene. Lack activity with other common P450 substrates including 7-ethoxycoumarin. This Capra hircus (Goat) protein is Cytochrome P450 2F3 (CYP2F3).